Here is a 184-residue protein sequence, read N- to C-terminus: ATP synthase subunit b, chloroplastic (184 aa).

Residues 27–49 form a helical membrane-spanning segment; sequence LATNPINLSVVFGVLIFFGKGVL.

The protein belongs to the ATPase B chain family. F-type ATPases have 2 components, F(1) - the catalytic core - and F(0) - the membrane proton channel. F(1) has five subunits: alpha(3), beta(3), gamma(1), delta(1), epsilon(1). F(0) has four main subunits: a(1), b(1), b'(1) and c(10-14). The alpha and beta chains form an alternating ring which encloses part of the gamma chain. F(1) is attached to F(0) by a central stalk formed by the gamma and epsilon chains, while a peripheral stalk is formed by the delta, b and b' chains.

The protein localises to the plastid. The protein resides in the chloroplast thylakoid membrane. F(1)F(0) ATP synthase produces ATP from ADP in the presence of a proton or sodium gradient. F-type ATPases consist of two structural domains, F(1) containing the extramembraneous catalytic core and F(0) containing the membrane proton channel, linked together by a central stalk and a peripheral stalk. During catalysis, ATP synthesis in the catalytic domain of F(1) is coupled via a rotary mechanism of the central stalk subunits to proton translocation. Its function is as follows. Component of the F(0) channel, it forms part of the peripheral stalk, linking F(1) to F(0). This chain is ATP synthase subunit b, chloroplastic, found in Arabis hirsuta (Hairy rock-cress).